The sequence spans 393 residues: MASLDSLVIFLFSTLFVTIVSSETPCPNFKSIISFGDSIADTGNLVGLSDRNQLPVTAFPPYGETFFHHPTGRSCDGRIIMDFIAEFVGLPYVPPYFGSKNRNFDKGVNFAVAGATALKSSFLKKRGIQPHTNVSLGVQLKSFKKSLPNLCGSPSDCRDMIGNALILMGEIGGNDYNFPFFNRKPVKEVEELVPFVIASISSTITELIGMGGKTFLVPGEFPIGCSVVYLTLYKTSNKDEYDPSTGCLKWLNKFGEYHSEKLKVELNRLRKLYPHVNIIYADYYNSLLRIFKEPAKFGFMERPFPACCGIGGPYNFNFTRKCGSVGVKSCKDPSKYVGWDGVHMTEAAYKWIADGILNGPYANPPFDRSCLRSEIKKESLYNQSTLTQACVKL.

A signal peptide spans methionine 1–serine 22. Serine 38 functions as the Nucleophile in the catalytic mechanism. Asparagine 133 and asparagine 317 each carry an N-linked (GlcNAc...) asparagine glycan. Active-site residues include aspartate 340 and histidine 343. The N-linked (GlcNAc...) asparagine glycan is linked to asparagine 382.

This sequence belongs to the 'GDSL' lipolytic enzyme family.

It localises to the secreted. This is GDSL esterase/lipase At1g28600 from Arabidopsis thaliana (Mouse-ear cress).